We begin with the raw amino-acid sequence, 196 residues long: Protein hunchback (196 aa).

Disordered regions lie at residues 16–60 (SHHH…NTNL) and 90–196 (AMTP…KYMA). Basic residues predominate over residues 17–30 (HHHHHHHAHHSYHQ). The segment covering 92–103 (TPSSSNNDQNSP) has biased composition (polar residues). The span at 125 to 144 (PTATTTTTPAAAAPTTTAAT) shows a compositional bias: low complexity. Positions 176–196 (AEREKEHDLMSNSSEDMKYMA) are enriched in basic and acidic residues.

It belongs to the hunchback C2H2-type zinc-finger protein family.

Its subcellular location is the nucleus. Its function is as follows. Gap class segmentation protein that controls development of head structures. The sequence is that of Protein hunchback (hb) from Drosophila silvestris (Fruit fly).